We begin with the raw amino-acid sequence, 563 residues long: Sulfite reductase [NADPH] hemoprotein beta-component (563 aa).

Residues Cys-427, Cys-433, Cys-472, and Cys-476 each contribute to the [4Fe-4S] cluster site. Cys-476 lines the siroheme pocket.

The protein belongs to the nitrite and sulfite reductase 4Fe-4S domain family. In terms of assembly, alpha(8)-beta(8). The alpha component is a flavoprotein, the beta component is a hemoprotein. Siroheme serves as cofactor. [4Fe-4S] cluster is required as a cofactor.

The catalysed reaction is hydrogen sulfide + 3 NADP(+) + 3 H2O = sulfite + 3 NADPH + 4 H(+). The protein operates within sulfur metabolism; hydrogen sulfide biosynthesis; hydrogen sulfide from sulfite (NADPH route): step 1/1. Component of the sulfite reductase complex that catalyzes the 6-electron reduction of sulfite to sulfide. This is one of several activities required for the biosynthesis of L-cysteine from sulfate. This chain is Sulfite reductase [NADPH] hemoprotein beta-component, found in Acidithiobacillus ferrooxidans (strain ATCC 53993 / BNL-5-31) (Leptospirillum ferrooxidans (ATCC 53993)).